Consider the following 637-residue polypeptide: Early transcription factor 70 kDa subunit (637 aa).

Residues 32–185 (RTIIDENRSV…GHIIDLMSEE (154 aa)) form the Helicase ATP-binding domain. 45-52 (HIMGSGKT) is a binding site for ATP. The DEXH box motif lies at 135–138 (DEAH). A Helicase C-terminal domain is found at 327-507 (KFKYFINRIQ…VLPFDIKKLL (181 aa)).

Belongs to the helicase family. VETF subfamily. Heterodimer of a 70 kDa and a 82 kDa subunit. Part of the early transcription complex composed of ETF, RAP94/OPG109, and the DNA-directed RNA polymerase.

The protein resides in the virion. In terms of biological role, acts with RNA polymerase to initiate transcription from early gene promoters. Is recruited by the RPO-associated protein of 94 kDa RAP94/OPG109 to form the early transcription complex, which also contains the core RNA polymerase. ETF heterodimer binds to early gene promoters. The protein is Early transcription factor 70 kDa subunit (OPG118) of Homo sapiens (Human).